We begin with the raw amino-acid sequence, 397 residues long: ORC1-type DNA replication protein 1 (397 aa).

ATP contacts are provided by residues 67-71 (TGKTA), Tyr208, and Arg220.

It belongs to the CDC6/cdc18 family.

Its function is as follows. Involved in regulation of DNA replication. The sequence is that of ORC1-type DNA replication protein 1 (cdc6-1) from Sulfolobus acidocaldarius (strain ATCC 33909 / DSM 639 / JCM 8929 / NBRC 15157 / NCIMB 11770).